We begin with the raw amino-acid sequence, 614 residues long: tRNA uridine 5-carboxymethylaminomethyl modification enzyme MnmG (614 aa).

Glycine 10–glycine 15 contributes to the FAD binding site. NAD(+) is bound at residue glycine 271 to phenylalanine 285.

It belongs to the MnmG family. In terms of assembly, homodimer. Heterotetramer of two MnmE and two MnmG subunits. FAD is required as a cofactor.

Its subcellular location is the cytoplasm. Its function is as follows. NAD-binding protein involved in the addition of a carboxymethylaminomethyl (cmnm) group at the wobble position (U34) of certain tRNAs, forming tRNA-cmnm(5)s(2)U34. This is tRNA uridine 5-carboxymethylaminomethyl modification enzyme MnmG from Ureaplasma urealyticum serovar 10 (strain ATCC 33699 / Western).